Here is a 228-residue protein sequence, read N- to C-terminus: MIITIDGPVATGKSTIAKKLAESIGFIFFDTGAMYRALTFGILKNQIDLSDPDTLQNYLDHFQFDIKVIHHDRHYFVDKEDVSKLIRGKEVTSSVSKVSAIKAVREKLMAIQRELAEGVNAVFEGRDMGTVVFPNANIKIFLTGRNDVRAKRRYDELTSKFPEETKELTLEKCLEEITKRDNYDSTREYSPLCQAEDAFVIDTSDLSIDEVVYKILEYKDTIKTKRPS.

Position 7–15 (7–15) interacts with ATP; it reads GPVATGKST.

It belongs to the cytidylate kinase family. Type 1 subfamily.

Its subcellular location is the cytoplasm. It carries out the reaction CMP + ATP = CDP + ADP. It catalyses the reaction dCMP + ATP = dCDP + ADP. In Protochlamydia amoebophila (strain UWE25), this protein is Cytidylate kinase.